The primary structure comprises 64 residues: Large ribosomal subunit protein bL35 (64 aa).

Residues 1-28 (MPKMKTHSGAKKRFKLTGSGKLKRQQAN) are disordered.

It belongs to the bacterial ribosomal protein bL35 family.

This Renibacterium salmoninarum (strain ATCC 33209 / DSM 20767 / JCM 11484 / NBRC 15589 / NCIMB 2235) protein is Large ribosomal subunit protein bL35.